We begin with the raw amino-acid sequence, 167 residues long: uncharacterized protein (167 aa).

The protein localises to the plastid. It is found in the chloroplast. This is an uncharacterized protein from Mesostigma viride (Green alga).